The chain runs to 510 residues: ATP synthase subunit alpha (510 aa).

Residue 170 to 177 (GDRQTGKT) coordinates ATP.

Belongs to the ATPase alpha/beta chains family. As to quaternary structure, F-type ATPases have 2 components, CF(1) - the catalytic core - and CF(0) - the membrane proton channel. CF(1) has five subunits: alpha(3), beta(3), gamma(1), delta(1), epsilon(1). CF(0) has three main subunits: a(1), b(2) and c(9-12). The alpha and beta chains form an alternating ring which encloses part of the gamma chain. CF(1) is attached to CF(0) by a central stalk formed by the gamma and epsilon chains, while a peripheral stalk is formed by the delta and b chains.

Its subcellular location is the cell inner membrane. It catalyses the reaction ATP + H2O + 4 H(+)(in) = ADP + phosphate + 5 H(+)(out). Functionally, produces ATP from ADP in the presence of a proton gradient across the membrane. The alpha chain is a regulatory subunit. The chain is ATP synthase subunit alpha from Caulobacter vibrioides (strain ATCC 19089 / CIP 103742 / CB 15) (Caulobacter crescentus).